A 164-amino-acid polypeptide reads, in one-letter code: NADH-quinone oxidoreductase subunit I (164 aa).

4Fe-4S ferredoxin-type domains lie at 56–85 (RRYE…IEAE) and 95–124 (TRYD…EGPN). [4Fe-4S] cluster-binding residues include cysteine 65, cysteine 68, cysteine 71, cysteine 75, cysteine 104, cysteine 107, cysteine 110, and cysteine 114.

The protein belongs to the complex I 23 kDa subunit family. In terms of assembly, NDH-1 is composed of 14 different subunits. Subunits NuoA, H, J, K, L, M, N constitute the membrane sector of the complex. [4Fe-4S] cluster is required as a cofactor.

It localises to the cell inner membrane. It catalyses the reaction a quinone + NADH + 5 H(+)(in) = a quinol + NAD(+) + 4 H(+)(out). Functionally, NDH-1 shuttles electrons from NADH, via FMN and iron-sulfur (Fe-S) centers, to quinones in the respiratory chain. The immediate electron acceptor for the enzyme in this species is believed to be ubiquinone. Couples the redox reaction to proton translocation (for every two electrons transferred, four hydrogen ions are translocated across the cytoplasmic membrane), and thus conserves the redox energy in a proton gradient. The sequence is that of NADH-quinone oxidoreductase subunit I from Anaplasma phagocytophilum (strain HZ).